The primary structure comprises 513 residues: Melianol synthase CYP71BQ4 (513 aa).

Residues M10–I30 form a helical membrane-spanning segment. C451 is a heme binding site.

The protein belongs to the cytochrome P450 family. The cofactor is heme. As to expression, accumulates in mature fruits and in juice vesicles.

It is found in the membrane. It carries out the reaction dihydroniloticin + 2 reduced [NADPH--hemoprotein reductase] + 2 O2 = melianol + 2 oxidized [NADPH--hemoprotein reductase] + 3 H2O + 2 H(+). It participates in secondary metabolite biosynthesis; terpenoid biosynthesis. Monooxygenase involved in the biosynthesis of limonoids triterpene natural products such as limonin, a compound with insecticidal activity responsible for the bitter taste in citrus. Catalyzes the conversion of dihydroniloticin to the protolimonoid melianol. This is Melianol synthase CYP71BQ4 from Citrus sinensis (Sweet orange).